A 302-amino-acid chain; its full sequence is ATP synthase gamma chain (302 aa).

Belongs to the ATPase gamma chain family. As to quaternary structure, F-type ATPases have 2 components, CF(1) - the catalytic core - and CF(0) - the membrane proton channel. CF(1) has five subunits: alpha(3), beta(3), gamma(1), delta(1), epsilon(1). CF(0) has three main subunits: a, b and c.

It is found in the cell inner membrane. In terms of biological role, produces ATP from ADP in the presence of a proton gradient across the membrane. The gamma chain is believed to be important in regulating ATPase activity and the flow of protons through the CF(0) complex. The chain is ATP synthase gamma chain from Bartonella bacilliformis (strain ATCC 35685 / KC583 / Herrer 020/F12,63).